We begin with the raw amino-acid sequence, 376 residues long: Riboflavin biosynthesis protein RibD (376 aa).

Residues 1 to 157 (MCFPLPSNSF…PIFFHYIQTK (157 aa)) form a deaminase region. In terms of domain architecture, CMP/dCMP-type deaminase spans 13 to 135 (MTDLDYMRRA…QLRQAGVEVV (123 aa)). His-62 serves as a coordination point for Zn(2+). The active-site Proton donor is the Glu-64. Residues Cys-87 and Cys-96 each contribute to the Zn(2+) site. The reductase stretch occupies residues 158–376 (RPYVLMKYAM…LLDYVVISPL (219 aa)). Ala-166 contacts NADP(+). Ser-180 provides a ligand contact to substrate. An NADP(+)-binding site is contributed by Trp-182. Arg-196 lines the substrate pocket. 2 residues coordinate NADP(+): Thr-208 and Asp-212. Substrate-binding residues include Leu-216 and Arg-219. Ser-233 contributes to the NADP(+) binding site. A substrate-binding site is contributed by Glu-304. Residue 306 to 312 (GSSLNFS) participates in NADP(+) binding.

In the N-terminal section; belongs to the cytidine and deoxycytidylate deaminase family. This sequence in the C-terminal section; belongs to the HTP reductase family. The cofactor is Zn(2+).

The catalysed reaction is 2,5-diamino-6-hydroxy-4-(5-phosphoribosylamino)-pyrimidine + H2O + H(+) = 5-amino-6-(5-phospho-D-ribosylamino)uracil + NH4(+). It catalyses the reaction 5-amino-6-(5-phospho-D-ribitylamino)uracil + NADP(+) = 5-amino-6-(5-phospho-D-ribosylamino)uracil + NADPH + H(+). The protein operates within cofactor biosynthesis; riboflavin biosynthesis; 5-amino-6-(D-ribitylamino)uracil from GTP: step 2/4. It functions in the pathway cofactor biosynthesis; riboflavin biosynthesis; 5-amino-6-(D-ribitylamino)uracil from GTP: step 3/4. Converts 2,5-diamino-6-(ribosylamino)-4(3h)-pyrimidinone 5'-phosphate into 5-amino-6-(ribosylamino)-2,4(1h,3h)-pyrimidinedione 5'-phosphate. The polypeptide is Riboflavin biosynthesis protein RibD (ribD) (Actinobacillus pleuropneumoniae (Haemophilus pleuropneumoniae)).